The sequence spans 954 residues: Glucosidase 2 subunit alpha (954 aa).

The first 22 residues, 1 to 22 (MVLLKWLVCQLVFFTAFSHAFT), serve as a signal peptide directing secretion. Residues asparagine 114, asparagine 126, asparagine 142, asparagine 173, and asparagine 345 are each glycosylated (N-linked (GlcNAc...) asparagine). Catalysis depends on aspartate 537, which acts as the Nucleophile. Glutamate 540 is an active-site residue. The active-site Proton donor is aspartate 614. N-linked (GlcNAc...) asparagine glycans are attached at residues asparagine 783, asparagine 791, asparagine 867, asparagine 880, asparagine 907, and asparagine 941.

This sequence belongs to the glycosyl hydrolase 31 family. In terms of assembly, heterodimer of a catalytic subunit alpha (ROT2) and a subunit beta (GTB1).

It localises to the endoplasmic reticulum. The enzyme catalyses N(4)-(alpha-D-Glc-(1-&gt;3)-alpha-D-Man-(1-&gt;2)-alpha-D-Man-(1-&gt;2)-alpha-D-Man-(1-&gt;3)-[alpha-D-Man-(1-&gt;2)-alpha-D-Man-(1-&gt;3)-[alpha-D-Man-(1-&gt;2)-alpha-D-Man-(1-&gt;6)]-alpha-D-Man-(1-&gt;6)]-beta-D-Man-(1-&gt;4)-beta-D-GlcNAc-(1-&gt;4)-beta-D-GlcNAc)-L-asparaginyl-[protein] + H2O = N(4)-(alpha-D-Man-(1-&gt;2)-alpha-D-Man-(1-&gt;2)-alpha-D-Man-(1-&gt;3)-[alpha-D-Man-(1-&gt;2)-alpha-D-Man-(1-&gt;3)-[alpha-D-Man-(1-&gt;2)-alpha-D-Man-(1-&gt;6)]-alpha-D-Man-(1-&gt;6)]-beta-D-Man-(1-&gt;4)-beta-D-GlcNAc-(1-&gt;4)-beta-D-GlcNAc)-L-asparaginyl-[protein] (N-glucan mannose isomer 9A1,2,3B1,2,3) + beta-D-glucose. It catalyses the reaction N(4)-(alpha-D-Glc-(1-&gt;3)-alpha-D-Glc-(1-&gt;3)-alpha-D-Man-(1-&gt;2)-alpha-D-Man-(1-&gt;2)-alpha-D-Man-(1-&gt;3)-[alpha-D-Man-(1-&gt;2)-alpha-D-Man-(1-&gt;3)-[alpha-D-Man-(1-&gt;2)-alpha-D-Man-(1-&gt;6)]-alpha-D-Man-(1-&gt;6)]-beta-D-Man-(1-&gt;4)-beta-D-GlcNAc-(1-&gt;4)-beta-D-GlcNAc)-L-asparaginyl-[protein] + H2O = N(4)-(alpha-D-Glc-(1-&gt;3)-alpha-D-Man-(1-&gt;2)-alpha-D-Man-(1-&gt;2)-alpha-D-Man-(1-&gt;3)-[alpha-D-Man-(1-&gt;2)-alpha-D-Man-(1-&gt;3)-[alpha-D-Man-(1-&gt;2)-alpha-D-Man-(1-&gt;6)]-alpha-D-Man-(1-&gt;6)]-beta-D-Man-(1-&gt;4)-beta-D-GlcNAc-(1-&gt;4)-beta-D-GlcNAc)-L-asparaginyl-[protein] + beta-D-glucose. The protein operates within glycan metabolism; N-glycan metabolism. Its activity is regulated as follows. Inhibited by glucose, maltose and nigerose, and by the antibiotic deoxynojirimycin. Catalytic subunit of glucosidase 2, which cleaves sequentially the 2 innermost alpha-1,3-linked glucose residues from the Glc(2)Man(9)GlcNAc(2) oligosaccharide precursor of immature glycoproteins. This is Glucosidase 2 subunit alpha (ROT2) from Saccharomyces cerevisiae (strain ATCC 204508 / S288c) (Baker's yeast).